A 279-amino-acid chain; its full sequence is MVLEAVLLGIVQGITEFLPISSTAHMYILAKLLNLHVPGRFFLSSVQLGTSFALILYFFKDVKGIISETSRSIYSFIQFGIRQKQGKRNEYTRLGLLLVTGTIPVVLLGFLLVRFVPDGFFSAARNLFTMGVALIVFGLLLGFADALFRRKKGNIFQITFIESVLIGAAQVFAIIPGVSRSGITITTARFLNFDRQLAVRFSFLLSLPVTFIGGMYGLVAGPDTDYYSLGYSLIGAIVSFVVGLLVVSALLRIISKTTFVLFVYYRVLFGLFLVIVSFF.

8 helical membrane passes run 1–21, 39–59, 96–116, 128–148, 155–175, 201–221, 231–251, and 259–279; these read MVLE…LPIS, GRFF…LYFF, LLLV…VRFV, FTMG…DALF, IFQI…FAII, FSFL…LVAG, YSLI…SALL, and FVLF…VSFF.

It belongs to the UppP family.

It is found in the cell membrane. It catalyses the reaction di-trans,octa-cis-undecaprenyl diphosphate + H2O = di-trans,octa-cis-undecaprenyl phosphate + phosphate + H(+). Its function is as follows. Catalyzes the dephosphorylation of undecaprenyl diphosphate (UPP). Confers resistance to bacitracin. The sequence is that of Undecaprenyl-diphosphatase from Tropheryma whipplei (strain Twist) (Whipple's bacillus).